The sequence spans 73 residues: Translation initiation factor IF-1 (73 aa).

In terms of domain architecture, S1-like spans 1 to 72; the sequence is MAKDEIIEFE…SKGRITYRGK (72 aa).

Belongs to the IF-1 family. In terms of assembly, component of the 30S ribosomal translation pre-initiation complex which assembles on the 30S ribosome in the order IF-2 and IF-3, IF-1 and N-formylmethionyl-tRNA(fMet); mRNA recruitment can occur at any time during PIC assembly.

The protein localises to the cytoplasm. In terms of biological role, one of the essential components for the initiation of protein synthesis. Stabilizes the binding of IF-2 and IF-3 on the 30S subunit to which N-formylmethionyl-tRNA(fMet) subsequently binds. Helps modulate mRNA selection, yielding the 30S pre-initiation complex (PIC). Upon addition of the 50S ribosomal subunit IF-1, IF-2 and IF-3 are released leaving the mature 70S translation initiation complex. The polypeptide is Translation initiation factor IF-1 (Psychrobacter arcticus (strain DSM 17307 / VKM B-2377 / 273-4)).